Reading from the N-terminus, the 480-residue chain is Glycogen synthase (480 aa).

Lys15 is a binding site for ADP-alpha-D-glucose.

This sequence belongs to the glycosyltransferase 1 family. Bacterial/plant glycogen synthase subfamily.

It catalyses the reaction [(1-&gt;4)-alpha-D-glucosyl](n) + ADP-alpha-D-glucose = [(1-&gt;4)-alpha-D-glucosyl](n+1) + ADP + H(+). The protein operates within glycan biosynthesis; glycogen biosynthesis. Synthesizes alpha-1,4-glucan chains using ADP-glucose. This is Glycogen synthase from Desulforamulus reducens (strain ATCC BAA-1160 / DSM 100696 / MI-1) (Desulfotomaculum reducens).